Here is a 460-residue protein sequence, read N- to C-terminus: Cysteine--tRNA ligase (460 aa).

Zn(2+) is bound at residue Cys28. Residues 30–40 carry the 'HIGH' region motif; that stretch reads MTVYDYCHLGH. Zn(2+) is bound by residues Cys209, His234, and Glu238. The 'KMSKS' region motif lies at 266 to 270; that stretch reads KMSKS. Residue Lys269 coordinates ATP.

It belongs to the class-I aminoacyl-tRNA synthetase family. Monomer. The cofactor is Zn(2+).

The protein localises to the cytoplasm. The enzyme catalyses tRNA(Cys) + L-cysteine + ATP = L-cysteinyl-tRNA(Cys) + AMP + diphosphate. This chain is Cysteine--tRNA ligase, found in Pseudomonas syringae pv. tomato (strain ATCC BAA-871 / DC3000).